The chain runs to 154 residues: Aspartate carbamoyltransferase regulatory chain (154 aa).

4 residues coordinate Zn(2+): cysteine 110, cysteine 115, cysteine 136, and cysteine 139.

The protein belongs to the PyrI family. As to quaternary structure, contains catalytic and regulatory chains. Requires Zn(2+) as cofactor.

Its function is as follows. Involved in allosteric regulation of aspartate carbamoyltransferase. This is Aspartate carbamoyltransferase regulatory chain from Halobacterium salinarum (strain ATCC 700922 / JCM 11081 / NRC-1) (Halobacterium halobium).